A 346-amino-acid polypeptide reads, in one-letter code: Sulfate/thiosulfate import ATP-binding protein CysA 1 (346 aa).

The 235-residue stretch at 3 to 237 folds into the ABC transporter domain; the sequence is VKVSGITKQF…PNSPFVFSFI (235 aa). 35–42 contributes to the ATP binding site; it reads GPSGSGKT.

It belongs to the ABC transporter superfamily. Sulfate/tungstate importer (TC 3.A.1.6) family. As to quaternary structure, the complex is composed of two ATP-binding proteins (CysA), two transmembrane proteins (CysT and CysW) and a solute-binding protein (CysP).

Its subcellular location is the cell inner membrane. It catalyses the reaction sulfate(out) + ATP + H2O = sulfate(in) + ADP + phosphate + H(+). The catalysed reaction is thiosulfate(out) + ATP + H2O = thiosulfate(in) + ADP + phosphate + H(+). Functionally, part of the ABC transporter complex CysAWTP involved in sulfate/thiosulfate import. Responsible for energy coupling to the transport system. This chain is Sulfate/thiosulfate import ATP-binding protein CysA 1, found in Agrobacterium fabrum (strain C58 / ATCC 33970) (Agrobacterium tumefaciens (strain C58)).